A 690-amino-acid chain; its full sequence is MPWEEPAGEKPSCSHSQKAFHMEPAQKPCFTTDMVTWALLCISAETVRGEAPSQPRGIPHRSPVSVDDLWLEKTQRKKLQKQAHVERRLHIGAVHKDGVKCWRKTIITSPESLNLPRRSHPLSQSAPTGLNHMGWPEHTPGTAMPDGALDTAVCADEVGSEEDLYDDLHSSSHHYSHPGGGGEQLAINELISDGSVVCAEALWDHVTMDDQELGFKAGDVIEVMDATNREWWWGRVADGEGWFPASFVRLRVNQDEPADDDAPLAGNSGAEDGGAEAQSSKDQMRTNVINEILSTERDYIKHLRDICEGYVRQCRKRADMFSEEQLRTIFGNIEDIYRCQKAFVKALEQRFNRERPHLSELGACFLEHQADFQIYSEYCNNHPNACVELSRLTKLSKYVYFFEACRLLQKMIDISLDGFLLTPVQKICKYPLQLAELLKYTHPQHRDFKDVEAALHAMKNVAQLINERKRRLENIDKIAQWQSSIEDWEGEDLLVRSSELIYSGELTRVTQPQAKSQQRMFFLFDHQLIYCKKDLLRRDVLYYKGRLDMDGLEVVDLEDGKDRDLHVSIKNAFRLHRGATGDSHLLCTRKPEQKQRWLKAFAREREQVQLDQETGFSITELQRKQAMLNASKQQVTGKPKAVGRPCYLTRQKHPALPSNRPQQQVLVLAEPRRKPSTFWHSISRLAPFRK.

The ABR (APC-binding region) domain stretch occupies residues 73 to 126 (KTQRKKLQKQAHVERRLHIGAVHKDGVKCWRKTIITSPESLNLPRRSHPLSQSA). The interval 113–145 (LNLPRRSHPLSQSAPTGLNHMGWPEHTPGTAMP) is disordered. One can recognise an SH3 domain in the interval 194–253 (GSVVCAEALWDHVTMDDQELGFKAGDVIEVMDATNREWWWGRVADGEGWFPASFVRLRVN). Residues 257–282 (PADDDAPLAGNSGAEDGGAEAQSSKD) form a disordered region. Residues 284-468 (MRTNVINEIL…KNVAQLINER (185 aa)) enclose the DH domain. Positions 499–606 (ELIYSGELTR…WLKAFARERE (108 aa)) constitute a PH domain.

Isoform 3 interacts with RHOA and RAC1, and (via ABR domain) with APC. Found in a complex consisting of ARHGEF4, APC and CTNNB1. Expressed at high levels in the brain, skeletal muscle and testis and at low levels in the kidney, lung, small intestine, ovary and prostate. Expression is aberrantly enhanced in most colorectal tumors.

It is found in the cytoplasm. The protein localises to the cell projection. The protein resides in the ruffle membrane. Its function is as follows. Acts as a guanine nucleotide exchange factor (GEF) for RHOA, RAC1 and CDC42 GTPases. Binding of APC may activate RAC1 GEF activity. The APC-ARHGEF4 complex seems to be involved in cell migration as well as in E-cadherin-mediated cell-cell adhesion. Required for MMP9 up-regulation via the JNK signaling pathway in colorectal tumor cells. Involved in tumor angiogenesis and may play a role in intestinal adenoma formation and tumor progression. The polypeptide is Rho guanine nucleotide exchange factor 4 (ARHGEF4) (Homo sapiens (Human)).